We begin with the raw amino-acid sequence, 485 residues long: Glutamate--tRNA ligase (485 aa).

A 'HIGH' region motif is present at residues 12 to 22 (PSPTGEPHVGT). The Zn(2+) site is built by cysteine 109, cysteine 111, cysteine 136, and histidine 138. Positions 253–257 (KLSKR) match the 'KMSKS' region motif. Residue lysine 256 participates in ATP binding.

Belongs to the class-I aminoacyl-tRNA synthetase family. Glutamate--tRNA ligase type 1 subfamily. Monomer. Zn(2+) is required as a cofactor.

It is found in the cytoplasm. It carries out the reaction tRNA(Glu) + L-glutamate + ATP = L-glutamyl-tRNA(Glu) + AMP + diphosphate. In terms of biological role, catalyzes the attachment of glutamate to tRNA(Glu) in a two-step reaction: glutamate is first activated by ATP to form Glu-AMP and then transferred to the acceptor end of tRNA(Glu). This Agrobacterium fabrum (strain C58 / ATCC 33970) (Agrobacterium tumefaciens (strain C58)) protein is Glutamate--tRNA ligase.